Reading from the N-terminus, the 93-residue chain is Small ribosomal subunit protein uS19 (93 aa).

Belongs to the universal ribosomal protein uS19 family.

In terms of biological role, protein S19 forms a complex with S13 that binds strongly to the 16S ribosomal RNA. This chain is Small ribosomal subunit protein uS19, found in Alkaliphilus oremlandii (strain OhILAs) (Clostridium oremlandii (strain OhILAs)).